Consider the following 248-residue polypeptide: ATP synthase subunit a (248 aa).

The propeptide at 1 to 3 is removed in mature form; sequence MLY. 7 helical membrane passes run 24–44, 86–106, 117–137, 146–166, 183–203, 205–225, and 227–247; these read MSLT…FFIF, IYMP…LVGL, FALP…IGFV, VLLP…VELL, ITSG…TSGI, LLFV…ELIV, and ILQA…SLIL.

It belongs to the ATPase A chain family. In terms of assembly, F-type ATPases have 2 components, CF(1) - the catalytic core - and CF(0) - the membrane proton channel. CF(1) has five subunits: alpha(3), beta(3), gamma(1), delta(1), epsilon(1). CF(0) has three main subunits: a, b and c.

It localises to the mitochondrion inner membrane. Functionally, mitochondrial membrane ATP synthase (F(1)F(0) ATP synthase or Complex V) produces ATP from ADP in the presence of a proton gradient across the membrane which is generated by electron transport complexes of the respiratory chain. F-type ATPases consist of two structural domains, F(1) - containing the extramembraneous catalytic core and F(0) - containing the membrane proton channel, linked together by a central stalk and a peripheral stalk. During catalysis, ATP synthesis in the catalytic domain of F(1) is coupled via a rotary mechanism of the central stalk subunits to proton translocation. Key component of the proton channel; it may play a direct role in the translocation of protons across the membrane. In Zancudomyces culisetae (Gut fungus), this protein is ATP synthase subunit a.